A 222-amino-acid chain; its full sequence is MGEPSREEYKIQSFDAETQQLLKTALKDPGAVDLEKVANVIVDHSLQDCVFSKEAGRMCYAIIQAESKQAGQSVFRRGLLNRLQQEYQAREQLRARSLQGWVCYVTFICNIFDYLRVNNMPMMALVNPVYDCLFRLAQPDSLSKEEEVDCLVLQLHRVGEQLEKMNGQRMDELFVLIRDGFLLPTGLSSLAQLLLLEIIEFRAAGWKTTPAAHKYYYSEVSD.

The MIF4G domain maps to 3–205 (EPSREEYKIQ…LEIIEFRAAG (203 aa)).

The protein belongs to the MIF4GD family. In terms of assembly, interacts with EIF4G1, EIF4G2 and SLBP; probably tethered by SLBP to the 3'-end of mRNAs ending with the histone stem-loop, it also interacts with EIF4G1 which is bound to their 5'-end.

The protein resides in the cytoplasm. It localises to the nucleus. Functionally, functions in replication-dependent translation of histone mRNAs which differ from other eukaryotic mRNAs in that they do not end with a poly-A tail but a stem-loop. May participate in circularizing those mRNAs specifically enhancing their translation. This Homo sapiens (Human) protein is MIF4G domain-containing protein (MIF4GD).